A 557-amino-acid chain; its full sequence is Aerobic glycerol-3-phosphate dehydrogenase (557 aa).

21-49 contributes to the FAD binding site; the sequence is DLVIIGGGITGAGIALDASERGMKVALVE.

It belongs to the FAD-dependent glycerol-3-phosphate dehydrogenase family. It depends on FAD as a cofactor.

It is found in the cytoplasm. The enzyme catalyses a quinone + sn-glycerol 3-phosphate = dihydroxyacetone phosphate + a quinol. Its pathway is polyol metabolism; glycerol degradation via glycerol kinase pathway; glycerone phosphate from sn-glycerol 3-phosphate (aerobic route): step 1/1. In Staphylococcus aureus (strain MRSA252), this protein is Aerobic glycerol-3-phosphate dehydrogenase (glpD).